The primary structure comprises 308 residues: Porphobilinogen deaminase (308 aa).

At Cys-241 the chain carries S-(dipyrrolylmethanemethyl)cysteine.

This sequence belongs to the HMBS family. As to quaternary structure, monomer. Requires dipyrromethane as cofactor.

The enzyme catalyses 4 porphobilinogen + H2O = hydroxymethylbilane + 4 NH4(+). The protein operates within porphyrin-containing compound metabolism; protoporphyrin-IX biosynthesis; coproporphyrinogen-III from 5-aminolevulinate: step 2/4. Its function is as follows. Tetrapolymerization of the monopyrrole PBG into the hydroxymethylbilane pre-uroporphyrinogen in several discrete steps. The chain is Porphobilinogen deaminase from Staphylococcus epidermidis (strain ATCC 35984 / DSM 28319 / BCRC 17069 / CCUG 31568 / BM 3577 / RP62A).